The primary structure comprises 969 residues: Leucine--tRNA ligase (969 aa).

The interval 1–23 is disordered; that stretch reads MTESPTTSPATGSGAAAPDSDAP. The 'HIGH' region motif lies at 78 to 89; it reads PYPSGEGLHVGH. The short motif at 737 to 741 is the 'KMSKS' region element; that stretch reads KIGKS. K740 contacts ATP.

This sequence belongs to the class-I aminoacyl-tRNA synthetase family.

Its subcellular location is the cytoplasm. It catalyses the reaction tRNA(Leu) + L-leucine + ATP = L-leucyl-tRNA(Leu) + AMP + diphosphate. This Mycolicibacterium paratuberculosis (strain ATCC BAA-968 / K-10) (Mycobacterium paratuberculosis) protein is Leucine--tRNA ligase.